Here is a 694-residue protein sequence, read N- to C-terminus: Outer dynein arm-docking complex subunit 1 (694 aa).

Coiled-coil stretches lie at residues 27-192 and 222-259; these read ELSR…RYLN and REEAKTKMGMLQERAEKELAQSDTEAQILLRQISHLEQ. Residues 271-290 form a disordered region; the sequence is RQPDPGVVQKEEQRAWETSE. A coiled-coil region spans residues 339 to 418; sequence NFINEQNSEL…EKIKTDIQVL (80 aa). Disordered stretches follow at residues 531 to 550 and 571 to 694; these read QDEEGSPKKRDSSPSLTLSS and SILS…RGYN. Phosphoserine occurs at positions 536, 542, 543, and 545. The segment covering 628–642 has biased composition (low complexity); it reads TSSSSYLGSTGYLET. A compositionally biased stretch (polar residues) spans 655–672; the sequence is SQSMGSEMSRGFSSGSGQ. Low complexity predominate over residues 673–687; the sequence is TSSAAPASRPSSATS.

The protein belongs to the ODA1/DCC2 family. Component of the outer dynein arm-docking complex along with ODAD2, ODAD3, ODAD4 and CLXN. Interacts with ODAD3. Interacts with ODAD4; this interaction may facilitate the recruitment and/or attachment of outer dynein arm docking complex proteins,including ODAD1, ODAD3, and ODAD4 to ciliary axonemes. Interacts with DNAH9. Interacts with MNS1. Interacts with PIERCE1 and PIERCE2; the interactions link the outer dynein arms docking complex (ODA-DC) to the internal microtubule inner proteins (MIP) in cilium axoneme.

Its subcellular location is the cytoplasm. The protein resides in the cytoskeleton. It localises to the cilium axoneme. In terms of biological role, component of the outer dynein arm-docking complex that mediates outer dynein arms (ODA) binding onto the doublet microtubule. Involved in mediating assembly of both ODAs and their axonemal docking complex onto ciliary microtubules. The polypeptide is Outer dynein arm-docking complex subunit 1 (Odad1) (Rattus norvegicus (Rat)).